An 89-amino-acid chain; its full sequence is Protein M7 (89 aa).

The signal sequence occupies residues 1 to 25 (MAAMKSLATAILVVLLLRRLPRGLS). Cystine bridges form between Cys-28-Cys-65, Cys-38-Cys-54, Cys-55-Cys-80, and Cys-67-Cys-87.

The protein belongs to the A9/FIL1 family. Tapetum of anthers.

The protein resides in the secreted. This is Protein M7 (M7) from Lilium henryi (Henry's lily).